Reading from the N-terminus, the 286-residue chain is Bifunctional protein FolD (286 aa).

NADP(+)-binding positions include 165–167 (GRS) and Ser-190.

This sequence belongs to the tetrahydrofolate dehydrogenase/cyclohydrolase family. In terms of assembly, homodimer.

It catalyses the reaction (6R)-5,10-methylene-5,6,7,8-tetrahydrofolate + NADP(+) = (6R)-5,10-methenyltetrahydrofolate + NADPH. The enzyme catalyses (6R)-5,10-methenyltetrahydrofolate + H2O = (6R)-10-formyltetrahydrofolate + H(+). Its pathway is one-carbon metabolism; tetrahydrofolate interconversion. Its function is as follows. Catalyzes the oxidation of 5,10-methylenetetrahydrofolate to 5,10-methenyltetrahydrofolate and then the hydrolysis of 5,10-methenyltetrahydrofolate to 10-formyltetrahydrofolate. The sequence is that of Bifunctional protein FolD from Staphylococcus aureus (strain JH9).